Reading from the N-terminus, the 296-residue chain is Small ribosomal subunit biogenesis GTPase RsgA (296 aa).

In terms of domain architecture, CP-type G spans 63–224 (RNQLVRPPVA…IADTPGFSSY (162 aa)). GTP contacts are provided by residues 112 to 115 (SKTD) and 167 to 175 (GQTGAGKST). Residues Cys-248, Cys-253, His-255, and Cys-261 each contribute to the Zn(2+) site.

Belongs to the TRAFAC class YlqF/YawG GTPase family. RsgA subfamily. As to quaternary structure, monomer. Associates with 30S ribosomal subunit, binds 16S rRNA. Zn(2+) serves as cofactor.

It localises to the cytoplasm. Its function is as follows. One of several proteins that assist in the late maturation steps of the functional core of the 30S ribosomal subunit. Helps release RbfA from mature subunits. May play a role in the assembly of ribosomal proteins into the subunit. Circularly permuted GTPase that catalyzes slow GTP hydrolysis, GTPase activity is stimulated by the 30S ribosomal subunit. The chain is Small ribosomal subunit biogenesis GTPase RsgA from Limosilactobacillus reuteri (strain DSM 20016) (Lactobacillus reuteri).